Here is a 484-residue protein sequence, read N- to C-terminus: tRNA sulfurtransferase (484 aa).

The THUMP domain maps to 63 to 167 (REMIERLTCT…LDRLFVIHRQ (105 aa)). ATP-binding positions include 185–186 (LM), lysine 267, glycine 289, and glutamine 298. Cysteine 346 and cysteine 457 are joined by a disulfide. Residues 405-483 (VLPGQIVIDI…GHTNVRVYRP (79 aa)) enclose the Rhodanese domain. The Cysteine persulfide intermediate role is filled by cysteine 457.

This sequence belongs to the ThiI family.

It is found in the cytoplasm. The catalysed reaction is [ThiI sulfur-carrier protein]-S-sulfanyl-L-cysteine + a uridine in tRNA + 2 reduced [2Fe-2S]-[ferredoxin] + ATP + H(+) = [ThiI sulfur-carrier protein]-L-cysteine + a 4-thiouridine in tRNA + 2 oxidized [2Fe-2S]-[ferredoxin] + AMP + diphosphate. It carries out the reaction [ThiS sulfur-carrier protein]-C-terminal Gly-Gly-AMP + S-sulfanyl-L-cysteinyl-[cysteine desulfurase] + AH2 = [ThiS sulfur-carrier protein]-C-terminal-Gly-aminoethanethioate + L-cysteinyl-[cysteine desulfurase] + A + AMP + 2 H(+). Its pathway is cofactor biosynthesis; thiamine diphosphate biosynthesis. Catalyzes the ATP-dependent transfer of a sulfur to tRNA to produce 4-thiouridine in position 8 of tRNAs, which functions as a near-UV photosensor. Also catalyzes the transfer of sulfur to the sulfur carrier protein ThiS, forming ThiS-thiocarboxylate. This is a step in the synthesis of thiazole, in the thiamine biosynthesis pathway. The sulfur is donated as persulfide by IscS. The sequence is that of tRNA sulfurtransferase from Pseudomonas aeruginosa (strain LESB58).